A 353-amino-acid chain; its full sequence is Methionine import ATP-binding protein MetN (353 aa).

The ABC transporter domain maps to 7–249; the sequence is LENIDVTFKQ…PKEELSRQFV (243 aa). An ATP-binding site is contributed by 41 to 48; it reads GYSGAGKS.

It belongs to the ABC transporter superfamily. Methionine importer (TC 3.A.1.24) family. In terms of assembly, the complex is composed of two ATP-binding proteins (MetN), two transmembrane proteins (MetI) and a solute-binding protein (MetQ).

It localises to the cell membrane. It catalyses the reaction L-methionine(out) + ATP + H2O = L-methionine(in) + ADP + phosphate + H(+). It carries out the reaction D-methionine(out) + ATP + H2O = D-methionine(in) + ADP + phosphate + H(+). Part of the ABC transporter complex MetNIQ involved in methionine import. Responsible for energy coupling to the transport system. The sequence is that of Methionine import ATP-binding protein MetN from Ligilactobacillus salivarius (strain UCC118) (Lactobacillus salivarius).